Here is a 196-residue protein sequence, read N- to C-terminus: Potassium-transporting ATPase KdpC subunit (196 aa).

Residues 7 to 27 (PALVLFFVLTLLTGVAYPLAV) traverse the membrane as a helical segment.

Belongs to the KdpC family. In terms of assembly, the system is composed of three essential subunits: KdpA, KdpB and KdpC.

The protein localises to the cell inner membrane. Part of the high-affinity ATP-driven potassium transport (or Kdp) system, which catalyzes the hydrolysis of ATP coupled with the electrogenic transport of potassium into the cytoplasm. This subunit acts as a catalytic chaperone that increases the ATP-binding affinity of the ATP-hydrolyzing subunit KdpB by the formation of a transient KdpB/KdpC/ATP ternary complex. This Polaromonas naphthalenivorans (strain CJ2) protein is Potassium-transporting ATPase KdpC subunit.